The following is a 311-amino-acid chain: tRNA-cytidine(32) 2-sulfurtransferase (311 aa).

Positions 47–52 match the PP-loop motif motif; the sequence is SGGKDS. C122, C125, and C213 together coordinate [4Fe-4S] cluster.

It belongs to the TtcA family. As to quaternary structure, homodimer. It depends on Mg(2+) as a cofactor. Requires [4Fe-4S] cluster as cofactor.

The protein resides in the cytoplasm. It carries out the reaction cytidine(32) in tRNA + S-sulfanyl-L-cysteinyl-[cysteine desulfurase] + AH2 + ATP = 2-thiocytidine(32) in tRNA + L-cysteinyl-[cysteine desulfurase] + A + AMP + diphosphate + H(+). It participates in tRNA modification. Catalyzes the ATP-dependent 2-thiolation of cytidine in position 32 of tRNA, to form 2-thiocytidine (s(2)C32). The sulfur atoms are provided by the cysteine/cysteine desulfurase (IscS) system. The protein is tRNA-cytidine(32) 2-sulfurtransferase of Salmonella typhi.